Consider the following 449-residue polypeptide: Chromosomal replication initiator protein DnaA (449 aa).

Residues 1–83 are domain I, interacts with DnaA modulators; it reads MDDSLWSACL…VELEIGSPPT (83 aa). Residues 77-114 are disordered; the sequence is EIGSPPTPDQREAATGATRAAPAQRSSEPRQRPVDSNL. Residues 83 to 112 form a domain II region; it reads TPDQREAATGATRAAPAQRSSEPRQRPVDS. A compositionally biased stretch (low complexity) spans 89 to 99; sequence AATGATRAAPA. Residues 113 to 329 are domain III, AAA+ region; sequence NLNPGFTFDS…GALRRITANA (217 aa). 4 residues coordinate ATP: Gly157, Gly159, Lys160, and Thr161. The segment at 330–449 is domain IV, binds dsDNA; sequence QFTGRAIDVD…YDNLLRTLST (120 aa).

It belongs to the DnaA family. In terms of assembly, oligomerizes as a right-handed, spiral filament on DNA at oriC.

It is found in the cytoplasm. Plays an essential role in the initiation and regulation of chromosomal replication. ATP-DnaA binds to the origin of replication (oriC) to initiate formation of the DNA replication initiation complex once per cell cycle. Binds the DnaA box (a 9 base pair repeat at the origin) and separates the double-stranded (ds)DNA. Forms a right-handed helical filament on oriC DNA; dsDNA binds to the exterior of the filament while single-stranded (ss)DNA is stabiized in the filament's interior. The ATP-DnaA-oriC complex binds and stabilizes one strand of the AT-rich DNA unwinding element (DUE), permitting loading of DNA polymerase. After initiation quickly degrades to an ADP-DnaA complex that is not apt for DNA replication. Binds acidic phospholipids. The polypeptide is Chromosomal replication initiator protein DnaA (Halorhodospira halophila (strain DSM 244 / SL1) (Ectothiorhodospira halophila (strain DSM 244 / SL1))).